The primary structure comprises 159 residues: Cytochrome P450 monooxygenase aunB (159 aa).

Residue Cys134 coordinates heme.

Belongs to the cytochrome P450 family. It depends on heme as a cofactor.

The enzyme catalyses 2 fonsecin B + NADPH + O2 + H(+) = aurasperone B + NADP(+) + 2 H2O. It carries out the reaction 2 rubrofusarin B + NADPH + O2 + H(+) = aurasperone A + NADP(+) + 2 H2O. The protein operates within secondary metabolite biosynthesis. Functionally, cytochrome P450 monooxygenase; part of the gene cluster that mediates the biosynthesis of aurasperone B, a dimeric gamma-naphthopyrone. The first step in the biosynthesis of aurasperone B is the production of gamma-naphthopyrone precursor YWA1 by the non-reducing polyketide synthase albA, via condensation of one acetyl-CoA starter unit with 6 malonyl-CoA units. YWA1 is then methylated by aunE at position C-6 to yield foncesin which is further methylated at position C-8 by aunD to produce fonsecin B. A key enzyme in the biosynthetic pathway is the cytochrome P450 monooxygenase aunB which catalyzes the oxidative dimerization of fonsecin B to aurasperone B. AunB also catalyzes the oxidative dimerization of rubrofusarin B into aurasperone A. This chain is Cytochrome P450 monooxygenase aunB, found in Aspergillus niger (strain ATCC 1015 / CBS 113.46 / FGSC A1144 / LSHB Ac4 / NCTC 3858a / NRRL 328 / USDA 3528.7).